The chain runs to 296 residues: Thioredoxin-related transmembrane protein 2 (296 aa).

The N-terminal stretch at 1-48 (MAVLAPLIALVYSVPRLSRWLARPYYFLSALLSAAFLLVRKLPPVCES) is a signal peptide. Residues 49-102 (LPTQREDGNPCDFDWREVEILMFLSAIVMMKNRRSITVEQHVGNIFMFSKVANA) lie on the Extracellular side of the membrane. A helical membrane pass occupies residues 103–125 (ILFFRLDIRMGLLYITLCIVFLM). The Cytoplasmic portion of the chain corresponds to 126–296 (TCKPPLYMGP…VPDEESKKDK (171 aa)). The 138-residue stretch at 132 to 269 (YMGPEYIKYF…LYQRAKKLSK (138 aa)) folds into the Thioredoxin domain. 2 positions are modified to phosphoserine: S211 and S243. The disordered stretch occupies residues 272 to 296 (DKIPEEQPVAAVPAAVPDEESKKDK). Over residues 277–287 (EQPVAAVPAAV) the composition is skewed to low complexity. The Di-lysine motif signature appears at 293–296 (KKDK).

As to quaternary structure, monomer. Homodimer; disulfide-linked. Occurs in both reduced and oxidized monomeric form. Oxidative conditions increase homodimerization. Interacts with CANX. Interacts with ATP2A2.

It is found in the endoplasmic reticulum membrane. Its subcellular location is the mitochondrion membrane. In terms of biological role, endoplasmic reticulum and mitochondria-associated protein that probably functions as a regulator of cellular redox state and thereby regulates protein post-translational modification, protein folding and mitochondrial activity. Indirectly regulates neuronal proliferation, migration, and organization in the developing brain. This is Thioredoxin-related transmembrane protein 2 (TMX2) from Bos taurus (Bovine).